Here is a 511-residue protein sequence, read N- to C-terminus: MDIRPSEISKILKEQIRDFDQKAEVSEIGWVLSVGDGIARVYGLDNIQAGEMVSFSNGVHGMALNLEIDNVGVVIFGSDRDIREGDSVKRLGAIVDVPVGPALLGRVVDALGNPIDGKGPLKATERRRVDVKAPGIIPRQSVHEPMPTGLKAIDALIPIGRGQRELVIGDRQTGKTAILLDTFLNQKPFHEKGAGNEQDKVYCIYVAIGQKRSTVAQFVKVLEERGALEYSIIVAATASDPAPMQFIAPLAGCAMGEYFRDNGQHALIGYDDLSKQAVAYRQMSLLLRRPPGREAYPGDVFYLHSRLLERAAKLNAENGSGSLTALPVIETQANDVSAYIPTNVISITDGQIFLETNLFYQGIRPAVNVGLSVSRVGSAAQIKAMKQVAGSIKGELAQYREMAAFAQFGSDLDASTQRLLNRGARLTELLKQPQFSPLKTEEQVVVIFAGVNGYLDALAVSDVGRFEQGLLTLLRSDHPDLLQAIAHQKQITDDVKDKLIVVLNTYAKIFS.

169 to 176 (GDRQTGKT) lines the ATP pocket.

Belongs to the ATPase alpha/beta chains family. In terms of assembly, F-type ATPases have 2 components, CF(1) - the catalytic core - and CF(0) - the membrane proton channel. CF(1) has five subunits: alpha(3), beta(3), gamma(1), delta(1), epsilon(1). CF(0) has three main subunits: a(1), b(2) and c(9-12). The alpha and beta chains form an alternating ring which encloses part of the gamma chain. CF(1) is attached to CF(0) by a central stalk formed by the gamma and epsilon chains, while a peripheral stalk is formed by the delta and b chains.

It is found in the cell inner membrane. The catalysed reaction is ATP + H2O + 4 H(+)(in) = ADP + phosphate + 5 H(+)(out). Its function is as follows. Produces ATP from ADP in the presence of a proton gradient across the membrane. The alpha chain is a regulatory subunit. The protein is ATP synthase subunit alpha of Bartonella quintana (strain Toulouse) (Rochalimaea quintana).